Reading from the N-terminus, the 541-residue chain is 2-isopropylmalate synthase (541 aa).

The Pyruvate carboxyltransferase domain maps to 8–284 (VIIFDTTLRD…LTNINTRHIY (277 aa)). Asp17, His208, His210, and Asn244 together coordinate Mn(2+). The tract at residues 408 to 541 (RLELVQVSCG…DQPTEVVAGS (134 aa)) is regulatory domain.

This sequence belongs to the alpha-IPM synthase/homocitrate synthase family. LeuA type 1 subfamily. As to quaternary structure, homodimer. Mn(2+) is required as a cofactor.

It is found in the cytoplasm. The enzyme catalyses 3-methyl-2-oxobutanoate + acetyl-CoA + H2O = (2S)-2-isopropylmalate + CoA + H(+). The protein operates within amino-acid biosynthesis; L-leucine biosynthesis; L-leucine from 3-methyl-2-oxobutanoate: step 1/4. In terms of biological role, catalyzes the condensation of the acetyl group of acetyl-CoA with 3-methyl-2-oxobutanoate (2-ketoisovalerate) to form 3-carboxy-3-hydroxy-4-methylpentanoate (2-isopropylmalate). This is 2-isopropylmalate synthase from Trichodesmium erythraeum (strain IMS101).